A 218-amino-acid polypeptide reads, in one-letter code: Glutathione S-transferase class-mu 26 kDa isozyme (218 aa).

The 83-residue stretch at 1-83 (MAPKFGYWKV…YIADKHNMLG (83 aa)) folds into the GST N-terminal domain. Glutathione-binding positions include 7–8 (YW), 41–45 (WSNDK), 54–55 (NL), and 67–68 (QS). Positions 85–203 (CPKERAEISM…NSSRYIKWPL (119 aa)) constitute a GST C-terminal domain. A substrate-binding site is contributed by Tyr-111.

It belongs to the GST superfamily. Mu family. Homodimer. In terms of tissue distribution, tegument and in subtegumentary parenchymal cells. GST 26 may be actively excreted by adult worms.

It catalyses the reaction RX + glutathione = an S-substituted glutathione + a halide anion + H(+). Its function is as follows. Conjugation of reduced glutathione to a wide number of exogenous and endogenous hydrophobic electrophiles. Functionally, GST isoenzymes appear to play a central role in the parasite detoxification system. Other functions are also suspected including a role in increasing the solubility of haematin in the parasite gut. The protein is Glutathione S-transferase class-mu 26 kDa isozyme of Schistosoma mansoni (Blood fluke).